Reading from the N-terminus, the 113-residue chain is Large ribosomal subunit protein P2 (113 aa).

The interval 62–113 (LASVPSGGAGGAAASGGAAAAGGSAQAEAAPEAAKEEEKEESDEDMGFGLFD) is disordered. A compositionally biased stretch (low complexity) spans 76–93 (SGGAAAAGGSAQAEAAPE). S103 is subject to Phosphoserine.

Belongs to the eukaryotic ribosomal protein P1/P2 family. As to quaternary structure, P1 and P2 exist as dimers at the large ribosomal subunit.

Its function is as follows. Plays an important role in the elongation step of protein synthesis. In Alternaria alternata (Alternaria rot fungus), this protein is Large ribosomal subunit protein P2 (ALTA5).